The chain runs to 292 residues: tRNA-cytidine(32) 2-sulfurtransferase (292 aa).

The PP-loop motif signature appears at 54–59; the sequence is SGGKDS. Cysteine 129, cysteine 132, and cysteine 220 together coordinate [4Fe-4S] cluster.

This sequence belongs to the TtcA family. In terms of assembly, homodimer. It depends on Mg(2+) as a cofactor. [4Fe-4S] cluster serves as cofactor.

It is found in the cytoplasm. It carries out the reaction cytidine(32) in tRNA + S-sulfanyl-L-cysteinyl-[cysteine desulfurase] + AH2 + ATP = 2-thiocytidine(32) in tRNA + L-cysteinyl-[cysteine desulfurase] + A + AMP + diphosphate + H(+). It participates in tRNA modification. Catalyzes the ATP-dependent 2-thiolation of cytidine in position 32 of tRNA, to form 2-thiocytidine (s(2)C32). The sulfur atoms are provided by the cysteine/cysteine desulfurase (IscS) system. This Cereibacter sphaeroides (strain ATCC 17025 / ATH 2.4.3) (Rhodobacter sphaeroides) protein is tRNA-cytidine(32) 2-sulfurtransferase.